Here is a 261-residue protein sequence, read N- to C-terminus: Acetylglutamate kinase (261 aa).

Substrate-binding positions include 48-49 (GG), R70, and N164.

This sequence belongs to the acetylglutamate kinase family. ArgB subfamily.

It is found in the cytoplasm. The enzyme catalyses N-acetyl-L-glutamate + ATP = N-acetyl-L-glutamyl 5-phosphate + ADP. It functions in the pathway amino-acid biosynthesis; L-arginine biosynthesis; N(2)-acetyl-L-ornithine from L-glutamate: step 2/4. In terms of biological role, catalyzes the ATP-dependent phosphorylation of N-acetyl-L-glutamate. The chain is Acetylglutamate kinase from Roseiflexus sp. (strain RS-1).